The sequence spans 296 residues: Phosphatidylserine decarboxylase proenzyme (296 aa).

Residues Asp113, His169, and Ser256 each act as charge relay system; for autoendoproteolytic cleavage activity in the active site. The Schiff-base intermediate with substrate; via pyruvic acid; for decarboxylase activity role is filled by Ser256. Residue Ser256 is modified to Pyruvic acid (Ser); by autocatalysis.

Belongs to the phosphatidylserine decarboxylase family. PSD-B subfamily. Prokaryotic type II sub-subfamily. As to quaternary structure, heterodimer of a large membrane-associated beta subunit and a small pyruvoyl-containing alpha subunit. Requires pyruvate as cofactor. Is synthesized initially as an inactive proenzyme. Formation of the active enzyme involves a self-maturation process in which the active site pyruvoyl group is generated from an internal serine residue via an autocatalytic post-translational modification. Two non-identical subunits are generated from the proenzyme in this reaction, and the pyruvate is formed at the N-terminus of the alpha chain, which is derived from the carboxyl end of the proenzyme. The autoendoproteolytic cleavage occurs by a canonical serine protease mechanism, in which the side chain hydroxyl group of the serine supplies its oxygen atom to form the C-terminus of the beta chain, while the remainder of the serine residue undergoes an oxidative deamination to produce ammonia and the pyruvoyl prosthetic group on the alpha chain. During this reaction, the Ser that is part of the protease active site of the proenzyme becomes the pyruvoyl prosthetic group, which constitutes an essential element of the active site of the mature decarboxylase.

It is found in the cell membrane. The catalysed reaction is a 1,2-diacyl-sn-glycero-3-phospho-L-serine + H(+) = a 1,2-diacyl-sn-glycero-3-phosphoethanolamine + CO2. It functions in the pathway phospholipid metabolism; phosphatidylethanolamine biosynthesis; phosphatidylethanolamine from CDP-diacylglycerol: step 2/2. Catalyzes the formation of phosphatidylethanolamine (PtdEtn) from phosphatidylserine (PtdSer). This Clostridium kluyveri (strain ATCC 8527 / DSM 555 / NBRC 12016 / NCIMB 10680 / K1) protein is Phosphatidylserine decarboxylase proenzyme.